We begin with the raw amino-acid sequence, 410 residues long: Multidrug resistance protein MdtM (410 aa).

At 1–11 the chain is on the cytoplasmic side; that stretch reads MPRFFTRHAAT. The chain crosses the membrane as a helical span at residues 12 to 32; that stretch reads LFFPMALILYDFAAYLSTDLI. Residues 33–48 lie on the Periplasmic side of the membrane; that stretch reads QPGIINVVRDFNADVS. A helical transmembrane segment spans residues 49-69; the sequence is LAPAAVSLYLAGGMALQWLLG. Over 70-78 the chain is Cytoplasmic; sequence PLSDRIGRR. A helical membrane pass occupies residues 79–99; sequence PVLITGALIFTLACAATMFTT. Topologically, residues 100 to 103 are periplasmic; it reads SMTQ. The chain crosses the membrane as a helical span at residues 104–124; sequence FLIARAIQGTSICFIATVGYV. The Cytoplasmic segment spans residues 125–140; that stretch reads TVQEAFGQTKGIKLMA. A helical transmembrane segment spans residues 141–161; the sequence is IITSIVLIAPIIGPLSGAALM. Topologically, residues 162 to 167 are periplasmic; that stretch reads HFMHWK. The chain crosses the membrane as a helical span at residues 168 to 188; it reads VLFAIIAVMGFISFVGLLLAM. The Cytoplasmic segment spans residues 189–216; the sequence is PETVKRGAVPFSAKSVLRDFRNVFCNRL. A helical transmembrane segment spans residues 217-237; that stretch reads FLFGAATISLSYIPMMSWVAV. Residues 238 to 251 lie on the Periplasmic side of the membrane; sequence SPVILIDAGSLTTS. The helical transmembrane segment at 252-272 threads the bilayer; sequence QFAWTQVPVFGAVIVANAIVA. Over 273–282 the chain is Cytoplasmic; it reads RFVKDPTEPR. The helical transmembrane segment at 283–303 threads the bilayer; sequence FIWRAVPIQLVGLSLLIVGNL. At 304-307 the chain is on the periplasmic side; sequence LSPH. Residues 308–328 form a helical membrane-spanning segment; that stretch reads VWLWSVLGTSLYAFGIGLIFP. Residues 329–348 lie on the Cytoplasmic side of the membrane; the sequence is TLFRFTLFSNKLPKGTVSAS. The chain crosses the membrane as a helical span at residues 349-369; sequence LNMVILMVMSVSVEIGRWLWF. The Periplasmic portion of the chain corresponds to 370-373; it reads NGGR. A helical membrane pass occupies residues 374–394; that stretch reads LPFHLLAVVAGVIVVFTLAGL. Residues 395-410 lie on the Cytoplasmic side of the membrane; that stretch reads LNRVRQHQAAELVEEQ.

This sequence belongs to the major facilitator superfamily. In terms of assembly, monomer.

The protein resides in the cell inner membrane. The catalysed reaction is Na(+)(in) + 2 H(+)(out) = Na(+)(out) + 2 H(+)(in). It carries out the reaction K(+)(in) + H(+)(out) = K(+)(out) + H(+)(in). Its activity is regulated as follows. Efflux is inhibited by the ionophore carbonyl cyanide 3-chlorophenylhydrazone (CCCP). Its function is as follows. Proton-dependent efflux pump. Confers resistance to a broad spectrum of chemically unrelated substrates. Overexpression confers resistance to acriflavine, chloramphenicol, norfloxacin, ethidium bromide and tetraphenylphosphonium bromide (TPP). Can also export a broad range of quaternary ammonium compounds (QACs) and contribute to the intrinsic resistance of E.coli to these antimicrobial compounds. In addition to its role in multidrug resistance, MdtM likely plays a physiological role in alkaline pH homeostasis and in resistance to bile salts. May function in alkaline pH homeostasis when millimolar concentrations of sodium or potassium are present in the growth medium. When overexpressed, can confer a tolerance to alkaline pH values up to 9.75. Probably acts as a low-affinity antiporter that catalyzes the exchange of internal Na(+) and K(+) cations for extracellular protons to maintain a stable internal pH, acid relative to outside, during exposure to alkaline environments. Can also catalyze Rb(+)/H(+) and Li(+)/H(+) antiport, but not Ca(2+)/H(+) exchange. The exact stoichiometry of antiport is unknown. Finally, it could contribute to bile salt resistance by catalyzing the transport of bile salts out of the cell cytoplasm. Mediates a bile salt/H(+) exchange driven by the electrochemical gradient. Binds to cholate and deoxycholate with micromolar affinity and catalyzes both cholate/H(+) and deoxycholate/H(+) exchange reactions. The polypeptide is Multidrug resistance protein MdtM (Escherichia coli (strain K12)).